Reading from the N-terminus, the 272-residue chain is Anamorsin homolog (272 aa).

Residues 1–156 form an N-terminal SAM-like domain region; sequence MDSMMNQKTV…KIGSSFALKK (156 aa). The tract at residues 157-185 is linker; sequence PVTNLFKIDLDDDVDLIDEDSLLTEEDLM. [2Fe-2S] cluster is bound by residues C195, C202, C205, and C207. The segment at 195–207 is fe-S binding site A; that stretch reads CETTKKACKNCVC. The [4Fe-4S] cluster site is built by C233, C236, C244, and C247. Short sequence motifs (cx2C motif) lie at residues 233–236 and 244–247; these read CGSC and CGTC. Positions 233 to 247 are fe-S binding site B; sequence CGSCGLGDAFRCGTC.

The protein belongs to the anamorsin family. As to quaternary structure, monomer. Interacts with ATR3. It depends on [2Fe-2S] cluster as a cofactor. [4Fe-4S] cluster is required as a cofactor.

Its subcellular location is the cytoplasm. The protein resides in the mitochondrion intermembrane space. Component of the cytosolic iron-sulfur (Fe-S) protein assembly (CIA) machinery. Required for the maturation of extramitochondrial Fe-S proteins. Part of an electron transfer chain functioning in an early step of cytosolic Fe-S biogenesis, facilitating the de novo assembly of a [4Fe-4S] cluster on the cytosolic Fe-S scaffold complex. Electrons are transferred from NADPH via FAD- and FMN-containing diflavin oxidoreductase TAH18/ATR3. Together with the diflavin oxidoreductase, also required for the assembly of the diferric tyrosyl radical cofactor of ribonucleotide reductase (RNR), probably by providing electrons for reduction during radical cofactor maturation in the catalytic small subunit. Required for embryo development. This Arabidopsis thaliana (Mouse-ear cress) protein is Anamorsin homolog.